A 149-amino-acid polypeptide reads, in one-letter code: MSTITIHTDGACSGNPGPGGWGAILEWNGHRKELKGGEADTTNNRMEMMAAIQALEALRKADRSVILITDSVYLRDGITKWIHGWKKRGWKTADKKPVKNVDLWQRLDELTRSHTIDWRWVKGHAGDPGNERADELAREGLAEARGRQP.

The region spanning 1 to 142 (MSTITIHTDG…ADELAREGLA (142 aa)) is the RNase H type-1 domain. Positions 9, 47, 70, and 134 each coordinate Mg(2+). Positions 124–149 (HAGDPGNERADELAREGLAEARGRQP) are disordered. Residues 129–149 (GNERADELAREGLAEARGRQP) show a composition bias toward basic and acidic residues.

The protein belongs to the RNase H family. As to quaternary structure, monomer. Mg(2+) is required as a cofactor.

It localises to the cytoplasm. It catalyses the reaction Endonucleolytic cleavage to 5'-phosphomonoester.. In terms of biological role, endonuclease that specifically degrades the RNA of RNA-DNA hybrids. The protein is Ribonuclease H of Maricaulis maris (strain MCS10) (Caulobacter maris).